The following is a 773-amino-acid chain: Acyl-homoserine lactone acylase PvdQ (773 aa).

Positions 1-23 (MSRALPGFLFAGLSVAVVLPAQA) are cleaved as a signal peptide. The propeptide at 200–221 (SQQVQALQLAAARNERFALERG) is spacer peptide. Residue Ser-222 is the Nucleophile of the active site.

This sequence belongs to the peptidase S45 family. In terms of assembly, heterodimer of an alpha subunit and a beta subunit processed from the same precursor.

Its subcellular location is the periplasm. The enzyme catalyses an N-acyl-L-homoserine lactone + H2O = L-homoserine lactone + a carboxylate. Its function is as follows. Catalyzes the deacylation of acyl-homoserine lactone (AHL or acyl-HSL), releasing homoserine lactone (HSL) and the corresponding fatty acid. Possesses a specificity for the degradation of long-chain acyl-HSLs (side chains of 11 to 14 carbons in length). This Pseudomonas syringae pv. tomato (strain ATCC BAA-871 / DC3000) protein is Acyl-homoserine lactone acylase PvdQ (pvdQ).